Consider the following 561-residue polypeptide: Lanosterol 14-alpha demethylase (561 aa).

C501 is a heme binding site.

It belongs to the cytochrome P450 family. The cofactor is heme.

The protein resides in the membrane. It carries out the reaction a 14alpha-methyl steroid + 3 reduced [NADPH--hemoprotein reductase] + 3 O2 = a Delta(14) steroid + formate + 3 oxidized [NADPH--hemoprotein reductase] + 4 H2O + 4 H(+). The enzyme catalyses a 14alpha-methyl steroid + reduced [NADPH--hemoprotein reductase] + O2 = a 14alpha-hydroxymethyl steroid + oxidized [NADPH--hemoprotein reductase] + H2O + H(+). It catalyses the reaction a 14alpha-hydroxymethyl steroid + reduced [NADPH--hemoprotein reductase] + O2 = a 14alpha-formyl steroid + oxidized [NADPH--hemoprotein reductase] + 2 H2O + H(+). The catalysed reaction is a 14alpha-formyl steroid + reduced [NADPH--hemoprotein reductase] + O2 = a Delta(14) steroid + formate + oxidized [NADPH--hemoprotein reductase] + H2O + 2 H(+). It carries out the reaction lanosterol + 3 reduced [NADPH--hemoprotein reductase] + 3 O2 = 4,4-dimethyl-5alpha-cholesta-8,14,24-trien-3beta-ol + formate + 3 oxidized [NADPH--hemoprotein reductase] + 4 H2O + 4 H(+). The enzyme catalyses lanosterol + reduced [NADPH--hemoprotein reductase] + O2 = 32-hydroxylanosterol + oxidized [NADPH--hemoprotein reductase] + H2O + H(+). It catalyses the reaction 32-hydroxylanosterol + reduced [NADPH--hemoprotein reductase] + O2 = 32-oxolanosterol + oxidized [NADPH--hemoprotein reductase] + 2 H2O + H(+). The catalysed reaction is 32-oxolanosterol + reduced [NADPH--hemoprotein reductase] + O2 = 4,4-dimethyl-5alpha-cholesta-8,14,24-trien-3beta-ol + formate + oxidized [NADPH--hemoprotein reductase] + H2O + 2 H(+). It carries out the reaction eburicol + 3 reduced [NADPH--hemoprotein reductase] + 3 O2 = 14-demethyleburicol + formate + 3 oxidized [NADPH--hemoprotein reductase] + 4 H2O + 4 H(+). The enzyme catalyses eburicol + reduced [NADPH--hemoprotein reductase] + O2 = 32-hydroxyeburicol + oxidized [NADPH--hemoprotein reductase] + H2O + H(+). It catalyses the reaction 32-hydroxyeburicol + reduced [NADPH--hemoprotein reductase] + O2 = 32-oxoeburicol + oxidized [NADPH--hemoprotein reductase] + 2 H2O + H(+). The catalysed reaction is 32-oxoeburicol + reduced [NADPH--hemoprotein reductase] + O2 = 14-demethyleburicol + formate + oxidized [NADPH--hemoprotein reductase] + H2O + 2 H(+). It participates in steroid biosynthesis; zymosterol biosynthesis; zymosterol from lanosterol: step 1/6. In terms of biological role, sterol 14alpha-demethylase that plays a critical role in the third module of ergosterol biosynthesis pathway, being ergosterol the major sterol component in fungal membranes that participates in a variety of functions. The third module or late pathway involves the ergosterol synthesis itself through consecutive reactions that mainly occur in the endoplasmic reticulum (ER) membrane. In filamentous fungi, during the initial step of this module, lanosterol (lanosta-8,24-dien-3beta-ol) can be metabolized to eburicol. Sterol 14alpha-demethylase catalyzes the three-step oxidative removal of the 14alpha-methyl group (C-32) of both these sterols in the form of formate, and converts eburicol and lanosterol to 14-demethyleburicol (4,4,24-trimethylergosta-8,14,24(28)-trienol) and 4,4-dimethyl-5alpha-cholesta-8,14,24-trien-3beta-ol, respectively, which are further metabolized by other enzymes in the pathway to ergosterol. Can also use substrates not intrinsic to fungi, such as 24,25-dihydrolanosterol (DHL), producing 4,4-dimethyl-8,14-cholestadien-3-beta-ol, but at lower rates than the endogenous substrates. The chain is Lanosterol 14-alpha demethylase (ERG11) from Mycosarcoma maydis (Corn smut fungus).